Here is a 259-residue protein sequence, read N- to C-terminus: Protein unc-50 homolog B (259 aa).

A compositionally biased stretch (polar residues) spans 1–11 (MLPTTSVSPRS). The disordered stretch occupies residues 1–21 (MLPTTSVSPRSPDNGILSPRD). Residues 1–82 (MLPTTSVSPR…TKDQWARDDP (82 aa)) lie on the Cytoplasmic side of the membrane. The helical transmembrane segment at 83–103 (AFLVLLGIWLCVSTVGFGFVL) threads the bilayer. Residues 104 to 109 (DMSFFE) are Lumenal-facing. Residues 110-130 (TFTLLLWVVFIDCVGVGLLIA) traverse the membrane as a helical segment. The Cytoplasmic segment spans residues 131-158 (TSMWFVSNKYMVNRQGKDYDVEWGYTFD). Residues 159–179 (VHLNAFYPLLVILHFIQLFFI) form a helical membrane-spanning segment. Residues 180–181 (NH) are Lumenal-facing. The helical transmembrane segment at 182–202 (VILTGWFIGCFVGNTLWLIAI) threads the bilayer. The Cytoplasmic segment spans residues 203–222 (GYYIYITFLGYSALPFLKNT). A helical membrane pass occupies residues 223 to 243 (VVLLYPFAALALLYILSLALG). The Lumenal portion of the chain corresponds to 244–259 (WNFTAKLCLFYKYRVR).

Belongs to the unc-50 family.

It localises to the nucleus inner membrane. It is found in the golgi apparatus membrane. In terms of biological role, involved in the cell surface expression of neuronal nicotinic receptors. Binds RNA. The chain is Protein unc-50 homolog B (unc50-b) from Xenopus laevis (African clawed frog).